The sequence spans 351 residues: Signal recognition particle receptor FtsY (351 aa).

GTP is bound by residues glycine 156–threonine 163, aspartate 238–arginine 242, and threonine 302–aspartate 305.

Belongs to the GTP-binding SRP family. FtsY subfamily. Part of the signal recognition particle protein translocation system, which is composed of SRP and FtsY. SRP is a ribonucleoprotein composed of Ffh and a 4.5S RNA molecule.

It localises to the cell membrane. It is found in the cytoplasm. The catalysed reaction is GTP + H2O = GDP + phosphate + H(+). Involved in targeting and insertion of nascent membrane proteins into the cytoplasmic membrane. Acts as a receptor for the complex formed by the signal recognition particle (SRP) and the ribosome-nascent chain (RNC). Interaction with SRP-RNC leads to the transfer of the RNC complex to the Sec translocase for insertion into the membrane, the hydrolysis of GTP by both Ffh and FtsY, and the dissociation of the SRP-FtsY complex into the individual components. In Buchnera aphidicola subsp. Schizaphis graminum (strain Sg), this protein is Signal recognition particle receptor FtsY.